Reading from the N-terminus, the 448-residue chain is Probable intron-encoded endonuclease bI1 (448 aa).

The tract at residues 1–132 is cob exon 1 encoded; it reads MRLLKSHPLL…LMMATAFLGY (132 aa). A run of 3 helical transmembrane segments spans residues 32 to 52, 86 to 106, and 112 to 132; these read FGSL…TLAM, ASAF…YGSY, and LVWA…FLGY. Residues 133–448 are cob intron 1 encoded; it reads QHSPKWFDIS…QWIVEDFSDK (316 aa). Residues 230 to 321 enclose the GIY-YIG domain; it reads DLSGVYMIIN…LKLLVPNYNI (92 aa).

To endonucleases of group I introns of fungi and phage. In terms of processing, the mature protein may arise from proteolytic cleavage of an in-frame translation of cob exon 1 plus intron 1, containing the bI1 open reading frame.

It is found in the mitochondrion inner membrane. Mitochondrial DNA endonuclease involved in intron homing. The polypeptide is Probable intron-encoded endonuclease bI1 (bI1) (Neurospora crassa (strain ATCC 24698 / 74-OR23-1A / CBS 708.71 / DSM 1257 / FGSC 987)).